A 420-amino-acid polypeptide reads, in one-letter code: D-tagatose-1,6-bisphosphate aldolase subunit GatZ (420 aa).

The protein belongs to the GatZ/KbaZ family. GatZ subfamily. As to quaternary structure, forms a complex with GatY.

The protein operates within carbohydrate metabolism; D-tagatose 6-phosphate degradation; D-glyceraldehyde 3-phosphate and glycerone phosphate from D-tagatose 6-phosphate: step 2/2. Its function is as follows. Component of the tagatose-1,6-bisphosphate aldolase GatYZ that is required for full activity and stability of the Y subunit. Could have a chaperone-like function for the proper and stable folding of GatY. When expressed alone, GatZ does not show any aldolase activity. Is involved in the catabolism of galactitol. This Escherichia coli O45:K1 (strain S88 / ExPEC) protein is D-tagatose-1,6-bisphosphate aldolase subunit GatZ.